A 311-amino-acid chain; its full sequence is Olfactory receptor 10G7 (311 aa).

Over 1–23 (MSNATLLTAFILTGLPHAPGLDA) the chain is Extracellular. Residue N3 is glycosylated (N-linked (GlcNAc...) asparagine). Residues 24–44 (PLFGIFLVVYVLTVLGNLLIL) traverse the membrane as a helical segment. Over 45–52 (LVIRVDSH) the chain is Cytoplasmic. A helical transmembrane segment spans residues 53 to 73 (LHTPMYYFLTNLSFIDMWFST). The Extracellular segment spans residues 74–98 (VTVPKMLMTLVSPSGRTISFHSCVA). The cysteines at positions 96 and 188 are disulfide-linked. Residues 99 to 119 (QLYFFHFLGSTECFLYTVMSY) traverse the membrane as a helical segment. Over 120–138 (DRYLAISYPLRYTNMMTGR) the chain is Cytoplasmic. A helical membrane pass occupies residues 139 to 159 (SCALLATGTWLSGSLHSAVQT). At 160–196 (ILTFHLPYCGPNQIQHYFCDAPPILKLACADTSANEM) the chain is on the extracellular side. The helical transmembrane segment at 197 to 216 (VIFVNIGLVASGCFVLIVLS) threads the bilayer. Residues 217–236 (YVSIVCSILRIRTSEGRHRA) are Cytoplasmic-facing. A helical membrane pass occupies residues 237 to 257 (FQTCASHCIVVLCFFGPGLFI). Residues 258 to 268 (YLRPGSRDALH) are Extracellular-facing. The chain crosses the membrane as a helical span at residues 269-289 (GVVAVFYTTLTPLFNPVVYTL). The Cytoplasmic segment spans residues 290–311 (RNKEVKKALLKLKNGSVFAQGE).

Belongs to the G-protein coupled receptor 1 family.

The protein localises to the cell membrane. Its function is as follows. Odorant receptor. The polypeptide is Olfactory receptor 10G7 (OR10G7) (Homo sapiens (Human)).